A 428-amino-acid polypeptide reads, in one-letter code: 3-phosphoshikimate 1-carboxyvinyltransferase (428 aa).

Residues K19, S20, and R24 each contribute to the 3-phosphoshikimate site. Position 19 (K19) interacts with phosphoenolpyruvate. G91 and R119 together coordinate phosphoenolpyruvate. 3-phosphoshikimate contacts are provided by S164, Q166, D312, and K339. Q166 contacts phosphoenolpyruvate. The active-site Proton acceptor is D312. 2 residues coordinate phosphoenolpyruvate: R343 and R386.

It belongs to the EPSP synthase family. As to quaternary structure, monomer.

It is found in the cytoplasm. It carries out the reaction 3-phosphoshikimate + phosphoenolpyruvate = 5-O-(1-carboxyvinyl)-3-phosphoshikimate + phosphate. Its pathway is metabolic intermediate biosynthesis; chorismate biosynthesis; chorismate from D-erythrose 4-phosphate and phosphoenolpyruvate: step 6/7. Functionally, catalyzes the transfer of the enolpyruvyl moiety of phosphoenolpyruvate (PEP) to the 5-hydroxyl of shikimate-3-phosphate (S3P) to produce enolpyruvyl shikimate-3-phosphate and inorganic phosphate. The polypeptide is 3-phosphoshikimate 1-carboxyvinyltransferase (Bacillus pumilus (strain SAFR-032)).